Reading from the N-terminus, the 423-residue chain is 3-phosphoshikimate 1-carboxyvinyltransferase (423 aa).

Residues Lys-21, Ser-22, and Arg-26 each contribute to the 3-phosphoshikimate site. Lys-21 is a phosphoenolpyruvate binding site. Positions 92 and 120 each coordinate phosphoenolpyruvate. 5 residues coordinate 3-phosphoshikimate: Ser-166, Gln-168, Ser-194, Asp-310, and Lys-337. Phosphoenolpyruvate is bound at residue Gln-168. Residue Asp-310 is the Proton acceptor of the active site. Residues Arg-341, Arg-384, and Lys-409 each contribute to the phosphoenolpyruvate site.

Belongs to the EPSP synthase family. In terms of assembly, monomer.

The protein localises to the cytoplasm. It catalyses the reaction 3-phosphoshikimate + phosphoenolpyruvate = 5-O-(1-carboxyvinyl)-3-phosphoshikimate + phosphate. It participates in metabolic intermediate biosynthesis; chorismate biosynthesis; chorismate from D-erythrose 4-phosphate and phosphoenolpyruvate: step 6/7. Functionally, catalyzes the transfer of the enolpyruvyl moiety of phosphoenolpyruvate (PEP) to the 5-hydroxyl of shikimate-3-phosphate (S3P) to produce enolpyruvyl shikimate-3-phosphate and inorganic phosphate. The polypeptide is 3-phosphoshikimate 1-carboxyvinyltransferase (Syntrophobacter fumaroxidans (strain DSM 10017 / MPOB)).